Consider the following 229-residue polypeptide: Large ribosomal subunit protein uL1 (229 aa).

Belongs to the universal ribosomal protein uL1 family. In terms of assembly, part of the 50S ribosomal subunit.

Binds directly to 23S rRNA. The L1 stalk is quite mobile in the ribosome, and is involved in E site tRNA release. In terms of biological role, protein L1 is also a translational repressor protein, it controls the translation of the L11 operon by binding to its mRNA. The sequence is that of Large ribosomal subunit protein uL1 from Leifsonia xyli subsp. xyli (strain CTCB07).